We begin with the raw amino-acid sequence, 1259 residues long: uncharacterized protein (1259 aa).

Positions 354–410 (KLNQAGGKRNSSMNNSTQNNNSSRSNNSARNNNSVWNNNNSAWKNNNSAWNDNSSWK) are disordered. A compositionally biased stretch (low complexity) spans 362 to 410 (RNSSMNNSTQNNNSSRSNNSARNNNSVWNNNNSAWKNNNSAWNDNSSWK).

It localises to the virion. This is an uncharacterized protein from Acanthamoeba polyphaga (Amoeba).